A 187-amino-acid polypeptide reads, in one-letter code: UPF0301 protein plu1183 (187 aa).

It belongs to the UPF0301 (AlgH) family.

The sequence is that of UPF0301 protein plu1183 from Photorhabdus laumondii subsp. laumondii (strain DSM 15139 / CIP 105565 / TT01) (Photorhabdus luminescens subsp. laumondii).